The primary structure comprises 411 residues: ATP-dependent RNA helicase eIF4A (411 aa).

Residues 1–23 (MSKPEDTSAAAAAPAGEAGNNLN) are disordered. Positions 9 to 19 (AAAAAPAGEAG) are enriched in low complexity. Positions 38-66 (DNFDNMELKEELLRGVYAYGFERPSAIQA) match the Q motif motif. Positions 69–239 (IVPVIKGHDV…KKFMRDPIRI (171 aa)) constitute a Helicase ATP-binding domain. Residue 82-89 (AQSGTGKT) coordinates ATP. The short motif at 187–190 (DEAD) is the DEAD box element. A Helicase C-terminal domain is found at 250-411 (GIKQFYVAVE…EMPLNVADLI (162 aa)).

It belongs to the DEAD box helicase family. eIF4A subfamily. Component of the eIF4F complex, which composition varies with external and internal environmental conditions. It is composed of at least eIF4A, eIF4E and eIF4G.

It is found in the cytoplasm. The enzyme catalyses ATP + H2O = ADP + phosphate + H(+). Its function is as follows. ATP-dependent RNA helicase which is a subunit of the eIF4F complex involved in cap recognition and is required for mRNA binding to ribosome. In the current model of translation initiation, eIF4A unwinds RNA secondary structures in the 5'-UTR of mRNAs which is necessary to allow efficient binding of the small ribosomal subunit, and subsequent scanning for the initiator codon. The sequence is that of ATP-dependent RNA helicase eIF4A (TIF1) from Mycosarcoma maydis (Corn smut fungus).